Consider the following 339-residue polypeptide: Centromere protein N (339 aa).

Residues Ser226 and Ser235 each carry the phosphoserine modification.

The protein belongs to the CENP-N/CHL4 family. In terms of assembly, component of the CENPA-NAC complex, at least composed of CENPA, CENPC, CENPH, CENPM, CENPN, CENPT and CENPU. The CENPA-NAC complex interacts with the CENPA-CAD complex, composed of CENPI, CENPK, CENPL, CENPO, CENPP, CENPQ, CENPR and CENPS. Interacts directly with CENPA. Identified in a centromere complex containing histones H2A, H2B and H4, and at least CENPA, CENPB, CENPC, CENPT, CENPN, HJURP, SUPT16H, SSRP1 and RSF1.

It localises to the nucleus. The protein resides in the chromosome. The protein localises to the centromere. Its subcellular location is the kinetochore. Its function is as follows. Component of the CENPA-NAC (nucleosome-associated) complex, a complex that plays a central role in assembly of kinetochore proteins, mitotic progression and chromosome segregation. The CENPA-NAC complex recruits the CENPA-CAD (nucleosome distal) complex and may be involved in incorporation of newly synthesized CENPA into centromeres. CENPN is the first protein to bind specifically to CENPA nucleosomes and the direct binding of CENPA nucleosomes by CENPN is required for centromere assembly. Required for chromosome congression and efficiently align the chromosomes on a metaphase plate. The sequence is that of Centromere protein N (CENPN) from Bos taurus (Bovine).